Consider the following 88-residue polypeptide: Small ribosomal subunit protein uS17 (88 aa).

This sequence belongs to the universal ribosomal protein uS17 family. As to quaternary structure, part of the 30S ribosomal subunit.

In terms of biological role, one of the primary rRNA binding proteins, it binds specifically to the 5'-end of 16S ribosomal RNA. The protein is Small ribosomal subunit protein uS17 of Stutzerimonas stutzeri (strain A1501) (Pseudomonas stutzeri).